The following is a 609-amino-acid chain: Large ribosomal subunit assembly factor BipA (609 aa).

The region spanning 3–198 (QNIRNIAIIA…AIIKYAPAPN (196 aa)) is the tr-type G domain. GTP contacts are provided by residues 15–20 (DHGKTT) and 128–131 (NKID).

This sequence belongs to the TRAFAC class translation factor GTPase superfamily. Classic translation factor GTPase family. BipA subfamily. Monomer.

The protein localises to the cytoplasm. The enzyme catalyses GTP + H2O = GDP + phosphate + H(+). A 50S ribosomal subunit assembly protein with GTPase activity, required for 50S subunit assembly at low temperatures, may also play a role in translation. Binds GTP and analogs. Binds the 70S ribosome between the 30S and 50S subunits, in a similar position as ribosome-bound EF-G; it contacts a number of ribosomal proteins, both rRNAs and the A-site tRNA. This is Large ribosomal subunit assembly factor BipA from Buchnera aphidicola subsp. Schizaphis graminum (strain Sg).